The following is a 270-amino-acid chain: Bis(5'-nucleosyl)-tetraphosphatase, symmetrical (270 aa).

It belongs to the Ap4A hydrolase family.

It catalyses the reaction P(1),P(4)-bis(5'-adenosyl) tetraphosphate + H2O = 2 ADP + 2 H(+). In terms of biological role, hydrolyzes diadenosine 5',5'''-P1,P4-tetraphosphate to yield ADP. This is Bis(5'-nucleosyl)-tetraphosphatase, symmetrical from Actinobacillus pleuropneumoniae serotype 3 (strain JL03).